The following is a 308-amino-acid chain: Putative S-adenosyl-L-methionine-dependent methyltransferase Mjls_1073 (308 aa).

S-adenosyl-L-methionine-binding positions include Asp-133 and 162–163 (DL).

It belongs to the UPF0677 family.

Its function is as follows. Exhibits S-adenosyl-L-methionine-dependent methyltransferase activity. The sequence is that of Putative S-adenosyl-L-methionine-dependent methyltransferase Mjls_1073 from Mycobacterium sp. (strain JLS).